The sequence spans 248 residues: tRNA (guanine-N(1)-)-methyltransferase (248 aa).

Residues Gly-117 and 137–142 (IGDFVL) each bind S-adenosyl-L-methionine.

Belongs to the RNA methyltransferase TrmD family. As to quaternary structure, homodimer.

It is found in the cytoplasm. It catalyses the reaction guanosine(37) in tRNA + S-adenosyl-L-methionine = N(1)-methylguanosine(37) in tRNA + S-adenosyl-L-homocysteine + H(+). Its function is as follows. Specifically methylates guanosine-37 in various tRNAs. The protein is tRNA (guanine-N(1)-)-methyltransferase of Polynucleobacter asymbioticus (strain DSM 18221 / CIP 109841 / QLW-P1DMWA-1) (Polynucleobacter necessarius subsp. asymbioticus).